We begin with the raw amino-acid sequence, 1627 residues long: Surface protein G (1627 aa).

The first 50 residues, 1–50 (MRDKKGPVNKRVDFLSNKLNKYSIRKFTVGTASILIGSLMYLGTQQEAEA), serve as a signal peptide directing secretion. The short motif at 22–33 (YSIRKFTVGTAS) is the YSIRK-G/S signaling motif element. Positions 51-418 (AENNIENPTT…KGSEFTFTPE (368 aa)) are ligand binding A region, squamous nasal epithelial cell binding. Disordered regions lie at residues 74–143 (EVTN…VRKA), 440–467 (KFNP…TTPT), and 496–1601 (EYGP…TGLE). Basic and acidic residues-rich tracts occupy residues 96–120 (DTIE…KEVA), 451–461 (KVTREGQKGEK), 505–523 (GHRD…EEVP), 554–570 (SIVE…RKFN), 579–589 (KVTREGQKGEK), 606–619 (SKGE…KDPI), 633–651 (GHRD…EEVP), 682–698 (SIVE…RKFN), 707–717 (KVTREGQKGEK), 736–747 (GEPKEEITKDPI), 761–779 (GHRD…EEVP), 810–826 (SIVE…RKFN), 835–845 (KVTREGQKGEK), 862–875 (SKGE…KDPI), 889–907 (GHRD…EEVP), 938–954 (SIVE…RKFN), 963–973 (KVTREGQKGEK), 990–1003 (SKGE…KDPI), 1017–1035 (GHRD…EEVP), 1066–1082 (SIVE…RKFN), 1091–1101 (KVTREGQKGEK), 1118–1131 (SKGE…KDPI), 1145–1163 (GHRD…EEVP), 1194–1210 (SIVE…RKFN), 1219–1229 (KVTREGQKGEK), 1246–1259 (SKGE…KDPI), 1273–1291 (GHRD…EEVP), 1322–1338 (SIVE…RKFN), 1347–1357 (KVTREGQKGEK), 1374–1387 (SKGE…KDPV), 1431–1442 (KVIEEPVDDVIK), and 1459–1478 (FETK…RVKQ). Residues 419–501 (APKTITELEK…NELTEYGPET (83 aa)) form the G5 1 domain. The G5 2 domain maps to 547–629 (YGPVKGDSIV…NELTEYGPET (83 aa)). Residues 675-757 (YGPVKGDSIV…NELTEYGPET (83 aa)) form the G5 3 domain. Positions 803–885 (YGPVKGDSIV…NELTEYGPET (83 aa)) constitute a G5 4 domain. Residues 931–1013 (YGPVKGDSIV…NELTEYGPET (83 aa)) enclose the G5 5 domain. In terms of domain architecture, G5 6 spans 1059–1141 (YGPVKGDSIV…NELTEYGPET (83 aa)). The G5 7 domain occupies 1187–1269 (YGPVKGDSIV…NELTEYGPET (83 aa)). The region spanning 1315-1397 (YGPVKGDSIV…NELTEFGGEK (83 aa)) is the G5 8 domain. A G5 9 domain is found at 1443–1525 (HGPKTGTPET…DKIVEFGGEK (83 aa)). Residues 1481 to 1495 (QPGSKTITTPITVNP) are compositionally biased toward polar residues. Positions 1509–1539 (EITKQPVDKIVEFGGEKPKDPKGPENPEKPS) are enriched in basic and acidic residues. Residues 1595 to 1599 (LPKTG) carry the LPXTG sorting signal motif. At Thr-1598 the chain carries Pentaglycyl murein peptidoglycan amidated threonine. Positions 1599–1627 (GLESTQKGLIFSSIIGIAGLMLLARRRKN) are cleaved as a propeptide — removed by sortase.

It is found in the secreted. The protein localises to the cell wall. Promotes adhesion of bacterial cells to human squamous nasal epithelial cells, a phenomenon which is likely to be important in nasal colonization. Forms short, extremely dense and thin fibrils all over the bacterial surface. Does not bind to either buccal cells or non-differentiated keratinocytes. Promotes cellular aggregation leading to biofilm formation. In Staphylococcus aureus (strain NCTC 8325 / PS 47), this protein is Surface protein G (sasG).